We begin with the raw amino-acid sequence, 226 residues long: Protein AhpA (226 aa).

Transmembrane regions (helical) follow at residues 12 to 32 (SMIS…LFGV) and 169 to 189 (GELI…HYFL).

Belongs to the Smp family.

It localises to the cell inner membrane. In terms of biological role, when anaerobically expressed in wild-type E.coli K12 confers a hemolytic phenotype, but not in an sheA mutant. Suggests it affects the expression of the latent E.coli K12 hemolysin sheA under anaerobic conditions. The polypeptide is Protein AhpA (ahpA) (Pasteurella multocida (strain Pm70)).